We begin with the raw amino-acid sequence, 1465 residues long: DNA polymerase III PolC-type (1465 aa).

Residues 427–583 (YVVFDVETTG…YDAEATGRLL (157 aa)) form the Exonuclease domain.

This sequence belongs to the DNA polymerase type-C family. PolC subfamily.

The protein resides in the cytoplasm. It carries out the reaction DNA(n) + a 2'-deoxyribonucleoside 5'-triphosphate = DNA(n+1) + diphosphate. Required for replicative DNA synthesis. This DNA polymerase also exhibits 3' to 5' exonuclease activity. This is DNA polymerase III PolC-type from Streptococcus pyogenes serotype M18 (strain MGAS8232).